Here is a 74-residue protein sequence, read N- to C-terminus: Putative defensin-like protein 27 (74 aa).

Positions 1–19 are cleaved as a signal peptide; sequence MVHPRFVFFAFLALSVLLA. Intrachain disulfides connect C36/C74, C46/C65, C51/C70, and C55/C72.

It belongs to the DEFL family.

The protein resides in the secreted. The sequence is that of Putative defensin-like protein 27 from Arabidopsis thaliana (Mouse-ear cress).